We begin with the raw amino-acid sequence, 199 residues long: Recombination protein RecR (199 aa).

The C4-type zinc-finger motif lies at 56-71 (CSICFNWSAEDPCEIC). The Toprim domain maps to 79 to 174 (SLWCVVADVK…TLRMTRLAFG (96 aa)).

This sequence belongs to the RecR family.

Functionally, may play a role in DNA repair. It seems to be involved in an RecBC-independent recombinational process of DNA repair. It may act with RecF and RecO. The protein is Recombination protein RecR of Synechococcus sp. (strain JA-2-3B'a(2-13)) (Cyanobacteria bacterium Yellowstone B-Prime).